Consider the following 387-residue polypeptide: uncharacterized protein (387 aa).

The N-terminal stretch at 1–27 (MKKWMITIAMLILAGIALFVFISPLKS) is a signal peptide.

This is an uncharacterized protein from Bacillus subtilis (strain 168).